The primary structure comprises 205 residues: Variable small protein 11 (205 aa).

The N-terminal stretch at 1–18 (MRKRISAIIMTLFMVFMS) is a signal peptide. C19 is lipidated: N-palmitoyl cysteine. C19 carries the S-diacylglycerol cysteine lipid modification.

This sequence belongs to the variable small protein (Vsp) family.

It localises to the cell outer membrane. In terms of biological role, the Vlp and Vsp proteins are antigenically distinct proteins, only one vlp or vsp gene is transcriptionally active at any one time. Switching between these genes is a mechanism of host immune response evasion. This Borrelia hermsii protein is Variable small protein 11.